Reading from the N-terminus, the 223-residue chain is MGQKVHPHGLRVGVIKEWDAKWYADKKNFADNLVEDHKIRNFVKKNSYAAGVSRIEIERAAKRIKLNIYTAKPGMIIGKGGQGIESLKNQLQKIVSNKNILINIVEVKRPEADAQLIAENIAQQLEKRIAFRRAMKQSIQRAMKSGVKGIKTACSGRLAGAEIARTEHYNEGTIPLQTLRADIDYGFAEADTTYGKIGVKVWVYKGEVLPARKNINEKEEANA.

The region spanning I39–K108 is the KH type-2 domain.

Belongs to the universal ribosomal protein uS3 family. As to quaternary structure, part of the 30S ribosomal subunit. Forms a tight complex with proteins S10 and S14.

Binds the lower part of the 30S subunit head. Binds mRNA in the 70S ribosome, positioning it for translation. The polypeptide is Small ribosomal subunit protein uS3 (Clostridium botulinum (strain 657 / Type Ba4)).